We begin with the raw amino-acid sequence, 251 residues long: Regulator of G-protein signaling 9-binding protein B (251 aa).

Residues methionine 1–glutamine 230 are Cytoplasmic-facing. Coiled coils occupy residues histidine 52–arginine 94 and alanine 158–asparagine 187. Residues leucine 231 to isoleucine 250 form a helical; Anchor for type IV membrane protein membrane-spanning segment. A topological domain (extracellular) is located at residue leucine 251.

The protein belongs to the RGS7BP/RGS9BP family.

It localises to the membrane. In terms of biological role, regulator of G protein-coupled receptor (GPCR) signaling. Probably acts by regulating the activity of some 'R7' family protein (RGS6, RGS7, RGS9 and/or RGS11). The sequence is that of Regulator of G-protein signaling 9-binding protein B (rgs9bp-b) from Xenopus laevis (African clawed frog).